Consider the following 392-residue polypeptide: Enoyl-[acyl-carrier-protein] reductase [NADH] (392 aa).

NAD(+)-binding positions include 48–53 (GCSTGY), 74–75 (FE), 111–112 (DA), and 139–140 (LA). A substrate-binding site is contributed by Y225. Residue Y235 is the Proton donor of the active site. NAD(+) is bound by residues K244 and 273–275 (LVT).

It belongs to the TER reductase family. As to quaternary structure, monomer.

It catalyses the reaction a 2,3-saturated acyl-[ACP] + NAD(+) = a (2E)-enoyl-[ACP] + NADH + H(+). It participates in lipid metabolism; fatty acid biosynthesis. In terms of biological role, involved in the final reduction of the elongation cycle of fatty acid synthesis (FAS II). Catalyzes the reduction of a carbon-carbon double bond in an enoyl moiety that is covalently linked to an acyl carrier protein (ACP). This chain is Enoyl-[acyl-carrier-protein] reductase [NADH], found in Idiomarina loihiensis (strain ATCC BAA-735 / DSM 15497 / L2-TR).